The following is a 291-amino-acid chain: N-acetylmannosamine kinase (291 aa).

ATP is bound by residues 5 to 12 and 132 to 139; these read AIDIGGTK and GVGGGVVC. Residues His-156, Cys-166, Cys-168, and Cys-173 each coordinate Zn(2+).

This sequence belongs to the ROK (NagC/XylR) family. NanK subfamily. In terms of assembly, homodimer.

It catalyses the reaction an N-acyl-D-mannosamine + ATP = an N-acyl-D-mannosamine 6-phosphate + ADP + H(+). The protein operates within amino-sugar metabolism; N-acetylneuraminate degradation; D-fructose 6-phosphate from N-acetylneuraminate: step 2/5. Functionally, catalyzes the phosphorylation of N-acetylmannosamine (ManNAc) to ManNAc-6-P. The polypeptide is N-acetylmannosamine kinase (Salmonella paratyphi A (strain ATCC 9150 / SARB42)).